We begin with the raw amino-acid sequence, 260 residues long: Translation initiation factor 2 subunit alpha (260 aa).

Residues 12-83 (GDLIVGTVHK…KKGHVDASLK (72 aa)) enclose the S1 motif domain.

The protein belongs to the eIF-2-alpha family. Heterotrimer composed of an alpha, a beta and a gamma chain.

EIF-2 functions in the early steps of protein synthesis by forming a ternary complex with GTP and initiator tRNA. This Methanosphaera stadtmanae (strain ATCC 43021 / DSM 3091 / JCM 11832 / MCB-3) protein is Translation initiation factor 2 subunit alpha.